A 367-amino-acid chain; its full sequence is 3-isopropylmalate dehydrogenase (367 aa).

77-90 (GPKWDAVPYEVRPE) contacts NAD(+). Substrate-binding residues include Arg-97, Arg-107, Arg-135, and Asp-226. Mg(2+) is bound by residues Asp-226, Asp-250, and Asp-254. 290 to 302 (GSAPDIAGKGIAN) lines the NAD(+) pocket.

The protein belongs to the isocitrate and isopropylmalate dehydrogenases family. LeuB type 1 subfamily. As to quaternary structure, homodimer. It depends on Mg(2+) as a cofactor. Requires Mn(2+) as cofactor.

It localises to the cytoplasm. The enzyme catalyses (2R,3S)-3-isopropylmalate + NAD(+) = 4-methyl-2-oxopentanoate + CO2 + NADH. Its pathway is amino-acid biosynthesis; L-leucine biosynthesis; L-leucine from 3-methyl-2-oxobutanoate: step 3/4. Catalyzes the oxidation of 3-carboxy-2-hydroxy-4-methylpentanoate (3-isopropylmalate) to 3-carboxy-4-methyl-2-oxopentanoate. The product decarboxylates to 4-methyl-2 oxopentanoate. The polypeptide is 3-isopropylmalate dehydrogenase (Mesorhizobium japonicum (strain LMG 29417 / CECT 9101 / MAFF 303099) (Mesorhizobium loti (strain MAFF 303099))).